Reading from the N-terminus, the 337-residue chain is Ferrochelatase (337 aa).

Fe cation contacts are provided by H189 and E293.

It belongs to the ferrochelatase family.

It is found in the cytoplasm. It carries out the reaction heme b + 2 H(+) = protoporphyrin IX + Fe(2+). The protein operates within porphyrin-containing compound metabolism; protoheme biosynthesis; protoheme from protoporphyrin-IX: step 1/1. Functionally, catalyzes the ferrous insertion into protoporphyrin IX. The chain is Ferrochelatase from Pseudomonas putida (strain W619).